The following is a 217-amino-acid chain: MKFFVDTADVAAIAELNDLGMVDGVTTNPSLILKSGRDITEVTKEICELVDGPVSAEVVATQADAMIAEGRKLAEIAENITVKLPLTWDGLKACKTLTDEGKMVNVTLCFSANQALLAAKAGASFISPFIGRLDDLNVDGMELIEDIRTIYDNYGYETEILAASIRTVNHMKEAALIGADVATAPPGVIKQMANHVLTDKGLAAFLSDWEKTGQKIL.

Lysine 83 functions as the Schiff-base intermediate with substrate in the catalytic mechanism.

It belongs to the transaldolase family. Type 3B subfamily.

The protein resides in the cytoplasm. The enzyme catalyses D-sedoheptulose 7-phosphate + D-glyceraldehyde 3-phosphate = D-erythrose 4-phosphate + beta-D-fructose 6-phosphate. The protein operates within carbohydrate degradation; pentose phosphate pathway; D-glyceraldehyde 3-phosphate and beta-D-fructose 6-phosphate from D-ribose 5-phosphate and D-xylulose 5-phosphate (non-oxidative stage): step 2/3. Functionally, transaldolase is important for the balance of metabolites in the pentose-phosphate pathway. In Dinoroseobacter shibae (strain DSM 16493 / NCIMB 14021 / DFL 12), this protein is Probable transaldolase.